Here is a 628-residue protein sequence, read N- to C-terminus: FAD-linked oxidoreductase hmp9 (628 aa).

The signal sequence occupies residues 1–29 (MFCIIRAQLLLLLHLLVLALLLVGTVCNA). Positions 34-53 (GHPSELEPLALKRGGSPRDD) are disordered. Residues N80 and N133 are each glycosylated (N-linked (GlcNAc...) asparagine). Residues 152-337 (LGQLPVYAID…LKTKIKAYPN (186 aa)) form the FAD-binding PCMH-type domain. N356 carries an N-linked (GlcNAc...) asparagine glycan.

Belongs to the oxygen-dependent FAD-linked oxidoreductase family.

It participates in secondary metabolite biosynthesis. Functionally, FAD-linked oxidoreductase; part of the gene cluster that mediates the biosynthesis of hypothemycin, a resorcylic acid lactone (RAL) that irreversibly inhibits a subset of protein kinases with a conserved cysteine in the ATP binding site such as human ERK2. The first step is performed by both PKSs hmp3 and hmp8 and leads to the production of 7',8'-dehydrozearalenol (DHZ). The highly reducing PKS hpm8 synthesizes the reduced hexaketide (7S,11S,2E,8E)-7,11-dihydroxy-dodeca-2,8-dienoate, which is transferred downstream to the non-reducing PKS hpm3. Hpm3 then extends the reduced hexaketide to a nonaketide, after which regioselective cyclization and macrolactonization affords DHZ. The next step is the conversion of DHZ into aigialomycin C and is performed by the O-methyltransferase hmp5, the FAD-binding monooxygenase hmp7, and the cytochrome P450 monooxygenase hmp1. The wide substrate tolerance of the hmp5 and hmp7 implies that the reactions from DHZ to aigialomycin C can occur in any order. The steps from aigialomycin C to hypothemycin are less well established. The FAD-linked oxidoreductase hmp9 presumably catalyzes oxidation of the C-6' hydroxyl to a ketone. The timing of this oxidation is important, since the resulting enone functional group is a Michael acceptor that can react spontaneously with glutathione, an abundant metabolite in fungal cells. The glutathione S-transferase hmp2 catalyzes cis-trans isomerization of the 7',8' double bond with equilibrium favoring the trans isomer. The hpm6-encoded transporter might preferentially pump hypothemycin out of the cell relative to the trans isomer aigialomycin A. The cis-to-trans isomerization may be coupled with C-4' hydroxylation, since all known hypothemycin analogs containing the enone functional group also have hydroxyl groups at both C-4' and C-5'. The chain is FAD-linked oxidoreductase hmp9 from Hypomyces subiculosus (Nectria subiculosa).